Here is a 566-residue protein sequence, read N- to C-terminus: MEDSDKENTLLLPNNKYRNQNFIRNQDEDENENENNDNLENDNNKRNYISINNYEPYKEIDNNNNKNNNNNNIINNNNKINFYNNLIPRIKSYFQEIKPFLKYCSFSFLFSFDPSEPYLVDYFTNVLGINQTIVYQEIYPYWTYSYFVFLLIFGILGEIIGYKVIIIIGMVAKILTIGVLLSTNNIIWMILEQITEGLSYSAYTVFLAYIYFSLDTSEYQKMACRVNAGYLVGIVSSGLLGQLLVEQRLPLVYLLSIACGTNILALILALGFSNYKIDQKFSLKEVISDLFGTFKNADIVRWYIWSGIAISIHQIVITYWQNLFLQVNDEQSWNGYISASAYFFASFFAIIPSKLGNKINNIQGIILVLFGLLGGGLLVLMGFGGSTVVSALSFIIYNCCFEFVSPIVNVQIAKKLSSRIGVLFSFNIMVALTIQVLVQSAVGKQFLNLDIKTQFYYYGACLFFLSFGFAILFGFLFLKKKINSNSNSNSNVDVLIVNHNTQNQNSEEKKKKKELYYNANIIDFENNNNNNNNNNNNNNNNNNNNNNNNNNNNNNNVGIGGNDNFK.

Positions 24–81 (RNQDEDENENENNDNLENDNNKRNYISINNYEPYKEIDNNNNKNNNNNNIINNNNKIN) form a coiled coil. The segment at 25 to 46 (NQDEDENENENNDNLENDNNKR) is disordered. Acidic residues predominate over residues 27–40 (DEDENENENNDNLE). 11 consecutive transmembrane segments (helical) span residues 148-168 (VFLLIFGILGEIIGYKVIIII), 171-191 (VAKILTIGVLLSTNNIIWMIL), 194-214 (ITEGLSYSAYTVFLAYIYFSL), 226-246 (VNAGYLVGIVSSGLLGQLLVE), 252-272 (VYLLSIACGTNILALILALGF), 304-324 (IWSGIAISIHQIVITYWQNLF), 332-352 (SWNGYISASAYFFASFFAIIP), 364-384 (GIILVLFGLLGGGLLVLMGFG), 388-408 (VVSALSFIIYNCCFEFVSPIV), 420-440 (IGVLFSFNIMVALTIQVLVQS), and 458-478 (YGACLFFLSFGFAILFGFLFL). The stretch at 517 to 544 (YNANIIDFENNNNNNNNNNNNNNNNNNN) forms a coiled coil. The span at 526–556 (NNNNNNNNNNNNNNNNNNNNNNNNNNNNNNN) shows a compositional bias: low complexity. The interval 526-566 (NNNNNNNNNNNNNNNNNNNNNNNNNNNNNNNVGIGGNDNFK) is disordered.

Belongs to the reduced folate carrier (RFC) transporter (TC 2.A.48) family.

It is found in the membrane. Folate transporter. The chain is Folate-like transporter DDB_G0272544 from Dictyostelium discoideum (Social amoeba).